The chain runs to 312 residues: Porphobilinogen deaminase (312 aa).

Cys-243 carries the S-(dipyrrolylmethanemethyl)cysteine modification.

This sequence belongs to the HMBS family. Monomer. Dipyrromethane serves as cofactor.

It catalyses the reaction 4 porphobilinogen + H2O = hydroxymethylbilane + 4 NH4(+). Its pathway is porphyrin-containing compound metabolism; protoporphyrin-IX biosynthesis; coproporphyrinogen-III from 5-aminolevulinate: step 2/4. Tetrapolymerization of the monopyrrole PBG into the hydroxymethylbilane pre-uroporphyrinogen in several discrete steps. The sequence is that of Porphobilinogen deaminase from Vibrio parahaemolyticus serotype O3:K6 (strain RIMD 2210633).